The following is a 40-amino-acid chain: Photosystem II reaction center protein X (40 aa).

The helical transmembrane segment at 10-30 (FFYSILFGAIVLGLLGGGFIF) threads the bilayer.

This sequence belongs to the PsbX family. Type 1 subfamily. PSII is composed of 1 copy each of membrane proteins PsbA, PsbB, PsbC, PsbD, PsbE, PsbF, PsbH, PsbI, PsbJ, PsbK, PsbL, PsbM, PsbT, PsbX, PsbY, PsbZ, Psb30/Ycf12, peripheral proteins PsbO, CyanoQ (PsbQ), PsbU, PsbV and a large number of cofactors. It forms dimeric complexes.

Its subcellular location is the cellular thylakoid membrane. Functionally, involved in the binding and/or turnover of quinones at the Q(B) site of photosystem II (PSII). PSII is a light-driven water plastoquinone oxidoreductase, using light energy to abstract electrons from H(2)O, generating a proton gradient subsequently used for ATP formation. This chain is Photosystem II reaction center protein X, found in Acaryochloris marina (strain MBIC 11017).